We begin with the raw amino-acid sequence, 458 residues long: tRNA-2-methylthio-N(6)-dimethylallyladenosine synthase (458 aa).

In terms of domain architecture, MTTase N-terminal spans 15–134 (KKVFIKTYGC…LPDLLEQTKQ (120 aa)). The [4Fe-4S] cluster site is built by Cys-24, Cys-60, Cys-97, Cys-175, Cys-179, and Cys-182. The Radical SAM core domain maps to 161–393 (RKRGVSAFLT…QVLLLEQQNA (233 aa)). The region spanning 396–457 (RSKIGQTTDV…SNSFVGEMTN (62 aa)) is the TRAM domain.

This sequence belongs to the methylthiotransferase family. MiaB subfamily. Monomer. Requires [4Fe-4S] cluster as cofactor.

Its subcellular location is the cytoplasm. The catalysed reaction is N(6)-dimethylallyladenosine(37) in tRNA + (sulfur carrier)-SH + AH2 + 2 S-adenosyl-L-methionine = 2-methylsulfanyl-N(6)-dimethylallyladenosine(37) in tRNA + (sulfur carrier)-H + 5'-deoxyadenosine + L-methionine + A + S-adenosyl-L-homocysteine + 2 H(+). Functionally, catalyzes the methylthiolation of N6-(dimethylallyl)adenosine (i(6)A), leading to the formation of 2-methylthio-N6-(dimethylallyl)adenosine (ms(2)i(6)A) at position 37 in tRNAs that read codons beginning with uridine. In Bartonella henselae (strain ATCC 49882 / DSM 28221 / CCUG 30454 / Houston 1) (Rochalimaea henselae), this protein is tRNA-2-methylthio-N(6)-dimethylallyladenosine synthase.